Reading from the N-terminus, the 141-residue chain is Nucleoside diphosphate kinase (141 aa).

ATP contacts are provided by Lys-11, Phe-59, Arg-87, Thr-93, Arg-104, and Asn-114. His-117 functions as the Pros-phosphohistidine intermediate in the catalytic mechanism.

This sequence belongs to the NDK family. In terms of assembly, homotetramer. Requires Mg(2+) as cofactor.

The protein localises to the cytoplasm. It carries out the reaction a 2'-deoxyribonucleoside 5'-diphosphate + ATP = a 2'-deoxyribonucleoside 5'-triphosphate + ADP. The catalysed reaction is a ribonucleoside 5'-diphosphate + ATP = a ribonucleoside 5'-triphosphate + ADP. Functionally, major role in the synthesis of nucleoside triphosphates other than ATP. The ATP gamma phosphate is transferred to the NDP beta phosphate via a ping-pong mechanism, using a phosphorylated active-site intermediate. The chain is Nucleoside diphosphate kinase from Cupriavidus pinatubonensis (strain JMP 134 / LMG 1197) (Cupriavidus necator (strain JMP 134)).